Here is a 244-residue protein sequence, read N- to C-terminus: 27 kDa core protein (244 aa).

This sequence belongs to the chordopoxvirinae D3 family.

It localises to the virion. In terms of biological role, late protein which is part of a large complex required for early virion morphogenesis. This complex participates in the formation of virosomes and the incorporation of virosomal contents into nascent immature virions. This is 27 kDa core protein from Swinepox virus (strain Swine/Nebraska/17077-99/1999) (SWPV).